A 162-amino-acid polypeptide reads, in one-letter code: L-amino acid N-acetyltransferase AaaT (162 aa).

The 159-residue stretch at 4–162 (IVIRHAETRD…VDAYYMARVK (159 aa)) folds into the N-acetyltransferase domain.

The protein belongs to the acetyltransferase family.

It carries out the reaction L-phenylalanine + acetyl-CoA = N-acetyl-L-phenylalanine + CoA + H(+). The catalysed reaction is L-methionine + acetyl-CoA = N-acetyl-L-methionine + CoA + H(+). Its function is as follows. Catalyzes the N-acetylation of L-phenylalanine and L-methionine using acetyl-CoA as acetyl donor in vitro. Cannot accept L-tyrosine as substrate and propionyl-CoA, succinyl-CoA or (S)-methylmalonyl-CoA as acyl donors. Is also able to acetylate and thus detoxify several nonhydrolyzable aminoacyl adenylates, but not the processed form of the peptide-nucleotide antibiotic microcin C (McC). When overproduced, provides complete resistance to leucyl sulfamoyl adenylate (LSA) and partial resistance to alanyl sulfamoyl adenylate (ASA) and phenylalanyl sulfamoyl adenylate (FSA). Therefore, may protect bacteria from various toxic aminoacyl nucleotides, either exogenous or those generated inside the cell during normal metabolism. The sequence is that of L-amino acid N-acetyltransferase AaaT from Escherichia coli (strain K12).